A 332-amino-acid polypeptide reads, in one-letter code: Glycerol-3-phosphate dehydrogenase [NAD(P)+] (332 aa).

Trp-11, Arg-30, and Lys-108 together coordinate NADPH. Sn-glycerol 3-phosphate-binding residues include Lys-108, Gly-137, and Ser-139. Ala-141 serves as a coordination point for NADPH. Lys-192, Asp-245, Ser-255, Arg-256, and Asn-257 together coordinate sn-glycerol 3-phosphate. Lys-192 functions as the Proton acceptor in the catalytic mechanism. Residue Arg-256 coordinates NADPH. NADPH is bound by residues Val-280 and Glu-282.

This sequence belongs to the NAD-dependent glycerol-3-phosphate dehydrogenase family.

Its subcellular location is the cytoplasm. It catalyses the reaction sn-glycerol 3-phosphate + NAD(+) = dihydroxyacetone phosphate + NADH + H(+). It carries out the reaction sn-glycerol 3-phosphate + NADP(+) = dihydroxyacetone phosphate + NADPH + H(+). Its pathway is membrane lipid metabolism; glycerophospholipid metabolism. Its function is as follows. Catalyzes the reduction of the glycolytic intermediate dihydroxyacetone phosphate (DHAP) to sn-glycerol 3-phosphate (G3P), the key precursor for phospholipid synthesis. The protein is Glycerol-3-phosphate dehydrogenase [NAD(P)+] of Burkholderia thailandensis (strain ATCC 700388 / DSM 13276 / CCUG 48851 / CIP 106301 / E264).